We begin with the raw amino-acid sequence, 480 residues long: Serralysin (480 aa).

His181 is a Zn(2+) binding site. Glu182 is an active-site residue. 2 residues coordinate Zn(2+): His185 and His191. Ca(2+) contacts are provided by Arg260, Asp263, Asp292, Gly294, Gly295, Asp297, Thr334, and Glu336. Hemolysin-type calcium-binding repeat units follow at residues 339–356 and 357–374; these read IGGS…ANTL and KGGA…ADNL.

Belongs to the peptidase M10B family. It depends on Zn(2+) as a cofactor. The cofactor is Ca(2+).

The protein resides in the secreted. It carries out the reaction Preferential cleavage of bonds with hydrophobic residues in P1'.. This chain is Serralysin (prtA), found in Photorhabdus laumondii subsp. laumondii (strain DSM 15139 / CIP 105565 / TT01) (Photorhabdus luminescens subsp. laumondii).